A 437-amino-acid polypeptide reads, in one-letter code: Serine hydroxymethyltransferase 2 (437 aa).

(6S)-5,6,7,8-tetrahydrofolate contacts are provided by residues leucine 125 and 129–131 (GHL). An N6-(pyridoxal phosphate)lysine modification is found at lysine 234.

This sequence belongs to the SHMT family. As to quaternary structure, homodimer. Pyridoxal 5'-phosphate is required as a cofactor.

It localises to the cytoplasm. The catalysed reaction is (6R)-5,10-methylene-5,6,7,8-tetrahydrofolate + glycine + H2O = (6S)-5,6,7,8-tetrahydrofolate + L-serine. The protein operates within one-carbon metabolism; tetrahydrofolate interconversion. It functions in the pathway amino-acid biosynthesis; glycine biosynthesis; glycine from L-serine: step 1/1. In terms of biological role, catalyzes the reversible interconversion of serine and glycine with tetrahydrofolate (THF) serving as the one-carbon carrier. This reaction serves as the major source of one-carbon groups required for the biosynthesis of purines, thymidylate, methionine, and other important biomolecules. Also exhibits THF-independent aldolase activity toward beta-hydroxyamino acids, producing glycine and aldehydes, via a retro-aldol mechanism. In Mesorhizobium japonicum (strain LMG 29417 / CECT 9101 / MAFF 303099) (Mesorhizobium loti (strain MAFF 303099)), this protein is Serine hydroxymethyltransferase 2.